The primary structure comprises 664 residues: DNA ligase (664 aa).

NAD(+)-binding positions include 31 to 35 (DYEFD), 80 to 81 (SL), and Glu110. Lys112 functions as the N6-AMP-lysine intermediate in the catalytic mechanism. NAD(+) contacts are provided by Arg133 and Glu169. The region spanning 237 to 257 (LEKARKWGFKVPAESELKDSI) is the BRCT 1 domain. NAD(+) contacts are provided by Lys284 and Lys308. The Zn(2+) site is built by Cys402, Cys405, Cys420, and Cys426. The region spanning 586–664 (NQTNILEGNT…SEEDFLKMLE (79 aa)) is the BRCT 2 domain.

This sequence belongs to the NAD-dependent DNA ligase family. LigA subfamily. The cofactor is Mg(2+). Requires Mn(2+) as cofactor.

It catalyses the reaction NAD(+) + (deoxyribonucleotide)n-3'-hydroxyl + 5'-phospho-(deoxyribonucleotide)m = (deoxyribonucleotide)n+m + AMP + beta-nicotinamide D-nucleotide.. Its function is as follows. DNA ligase that catalyzes the formation of phosphodiester linkages between 5'-phosphoryl and 3'-hydroxyl groups in double-stranded DNA using NAD as a coenzyme and as the energy source for the reaction. It is essential for DNA replication and repair of damaged DNA. In Christiangramia forsetii (strain DSM 17595 / CGMCC 1.15422 / KT0803) (Gramella forsetii), this protein is DNA ligase.